The sequence spans 331 residues: Vitamin B12 import system permease protein BtuC (331 aa).

The next 9 helical transmembrane spans lie at 20–42 (LLIGLFLSVCVLYLLVGELWLSP), 62–84 (LLAAAVIGASLAVAGATLQVLLG), 91–113 (GVVGVSGGASVAMVILLLFFPSL), 117–136 (VAFMAAAVLGALLFTLLLVV), 148–170 (LLLVGVALGILSGAVVTWAFYFS), 190–209 (SWYQHLLSLVAVPVVIWLVL), 240–262 (LAIALLVGASVALGGVIGFVGLV), 277–299 (LLLPLSALCGALLLVSADLIARL), and 306–325 (LPLGVVTTTLGAPIFIWMLV).

The protein belongs to the binding-protein-dependent transport system permease family. FecCD subfamily. The complex is composed of two ATP-binding proteins (BtuD), two transmembrane proteins (BtuC) and a solute-binding protein (BtuF).

The protein localises to the cell inner membrane. Part of the ABC transporter complex BtuCDF involved in vitamin B12 import. Involved in the translocation of the substrate across the membrane. In Vibrio cholerae serotype O1 (strain ATCC 39315 / El Tor Inaba N16961), this protein is Vitamin B12 import system permease protein BtuC.